Consider the following 605-residue polypeptide: Protein Spindly (605 aa).

M1 is modified (N-acetylmethionine). Residues 3–442 adopt a coiled-coil conformation; it reads TDIVINLRCK…ELKLKYEPEE (440 aa). S513, S515, and S555 each carry phosphoserine. The segment at 545-581 is disordered; the sequence is LSERSGNTLNSPRLAAESKLQTEVKEGKETASKLEKE. A compositionally biased stretch (basic and acidic residues) spans 564 to 581; that stretch reads LQTEVKEGKETASKLEKE.

It belongs to the Spindly family. In terms of assembly, interacts with KNTC1 and ZW10. These interactions appear weak and may be transient or indirect. Interacts with dynein intermediate chain and dynactin (DCTN1). Interacts with the catalytically active form of USP45. Post-translationally, monoubiquitinated with'Lys-48' linkage. Deubiquitinated by USP45.

Its subcellular location is the cytoplasm. The protein localises to the cytoskeleton. It localises to the microtubule organizing center. The protein resides in the centrosome. It is found in the chromosome. Its subcellular location is the centromere. The protein localises to the kinetochore. It localises to the nucleus. The protein resides in the spindle pole. In terms of biological role, required for the localization of dynein and dynactin to the mitotic kintochore. Dynein is believed to control the initial lateral interaction between the kinetochore and spindle microtubules and to facilitate the subsequent formation of end-on kinetochore-microtubule attachments mediated by the NDC80 complex. Also required for correct spindle orientation. Does not appear to be required for the removal of spindle assembly checkpoint (SAC) proteins from the kinetochore upon bipolar spindle attachment. Acts as an adapter protein linking the dynein motor complex to various cargos and converts dynein from a non-processive to a highly processive motor in the presence of dynactin. Facilitates the interaction between dynein and dynactin and activates dynein processivity (the ability to move along a microtubule for a long distance without falling off the track). Plays a role in cell migration. The polypeptide is Protein Spindly (Macaca fascicularis (Crab-eating macaque)).